Consider the following 500-residue polypeptide: Probable cytosol aminopeptidase (500 aa).

Mn(2+)-binding residues include Lys264 and Asp269. The active site involves Lys276. Mn(2+)-binding residues include Asp287, Asp346, and Glu348. Arg350 is an active-site residue.

Belongs to the peptidase M17 family. The cofactor is Mn(2+).

The protein resides in the cytoplasm. It carries out the reaction Release of an N-terminal amino acid, Xaa-|-Yaa-, in which Xaa is preferably Leu, but may be other amino acids including Pro although not Arg or Lys, and Yaa may be Pro. Amino acid amides and methyl esters are also readily hydrolyzed, but rates on arylamides are exceedingly low.. The catalysed reaction is Release of an N-terminal amino acid, preferentially leucine, but not glutamic or aspartic acids.. Its function is as follows. Presumably involved in the processing and regular turnover of intracellular proteins. Catalyzes the removal of unsubstituted N-terminal amino acids from various peptides. The sequence is that of Probable cytosol aminopeptidase from Nitrobacter winogradskyi (strain ATCC 25391 / DSM 10237 / CIP 104748 / NCIMB 11846 / Nb-255).